Here is a 92-residue protein sequence, read N- to C-terminus: CRISPR-associated endoribonuclease Cas2 3 (92 aa).

Residue aspartate 9 coordinates Mg(2+).

Belongs to the CRISPR-associated endoribonuclease Cas2 protein family. As to quaternary structure, homodimer, forms a heterotetramer with a Cas1 homodimer. Mg(2+) serves as cofactor.

CRISPR (clustered regularly interspaced short palindromic repeat), is an adaptive immune system that provides protection against mobile genetic elements (viruses, transposable elements and conjugative plasmids). CRISPR clusters contain sequences complementary to antecedent mobile elements and target invading nucleic acids. CRISPR clusters are transcribed and processed into CRISPR RNA (crRNA). Functions as a ssRNA-specific endoribonuclease. Involved in the integration of spacer DNA into the CRISPR cassette. The protein is CRISPR-associated endoribonuclease Cas2 3 of Synechocystis sp. (strain ATCC 27184 / PCC 6803 / Kazusa).